The following is a 178-amino-acid chain: Large ribosomal subunit protein bL17 (178 aa).

Over residues 126–139 (DRARRVAASKKAEE) the composition is skewed to basic and acidic residues. The interval 126 to 178 (DRARRVAASKKAEEQAPAAEAEEQAPAAEAEAPAADAAAEAKADEAAEDKKDA) is disordered. Residues 140–163 (QAPAAEAEEQAPAAEAEAPAADAA) show a composition bias toward low complexity. Basic and acidic residues predominate over residues 164–178 (AEAKADEAAEDKKDA).

This sequence belongs to the bacterial ribosomal protein bL17 family. Part of the 50S ribosomal subunit. Contacts protein L32.

The sequence is that of Large ribosomal subunit protein bL17 from Nocardia farcinica (strain IFM 10152).